We begin with the raw amino-acid sequence, 380 residues long: MTRVSLSPLAWLDEVETQRRAAGLRRTVRTRPPVGAELDLASNDYLGLSQHPRVIDGGVSALRTWGAGSTGSRLVTGNTELHEAFEDVLAAFVGAESALVFSSGYTANLGAVVALSGPGSLLVSDANTHASLVDACRLSRARVVVTPHNDTAAVEQALATRSEARAVVVTDSVFSADGDLAPLRALHTACRKHGALLIVDEAHGLGVRGDGGRGLLDEVGLAGAPDLVMTTTLSKALGSQGGVVLGPAAVRAHLIDTARPFIFDTGLAPAAVGAAFAALQVLIDEPWRAQRVLDHAATLASICDVTEVPSSAVVSVILGEPEVAFAAAAACLDRGVRVGCFRPPTVPAGTSRLRLTARASLSEDEMTLARRVLTEVLSPR.

Arginine 26 lines the substrate pocket. Pyridoxal 5'-phosphate is bound at residue 104 to 105 (GY). Histidine 129 serves as a coordination point for substrate. Residues serine 175, 200–203 (DEAH), and 232–235 (TLSK) each bind pyridoxal 5'-phosphate. At lysine 235 the chain carries N6-(pyridoxal phosphate)lysine. A substrate-binding site is contributed by threonine 345.

This sequence belongs to the class-II pyridoxal-phosphate-dependent aminotransferase family. BioF subfamily. In terms of assembly, homodimer. Pyridoxal 5'-phosphate is required as a cofactor.

The enzyme catalyses 6-carboxyhexanoyl-[ACP] + L-alanine + H(+) = (8S)-8-amino-7-oxononanoate + holo-[ACP] + CO2. Its pathway is cofactor biosynthesis; biotin biosynthesis. Functionally, catalyzes the decarboxylative condensation of pimeloyl-[acyl-carrier protein] and L-alanine to produce 8-amino-7-oxononanoate (AON), [acyl-carrier protein], and carbon dioxide. The sequence is that of 8-amino-7-oxononanoate synthase from Mycolicibacterium vanbaalenii (strain DSM 7251 / JCM 13017 / BCRC 16820 / KCTC 9966 / NRRL B-24157 / PYR-1) (Mycobacterium vanbaalenii).